We begin with the raw amino-acid sequence, 105 residues long: Large ribosomal subunit protein uL24 (105 aa).

The protein belongs to the universal ribosomal protein uL24 family. Part of the 50S ribosomal subunit.

In terms of biological role, one of two assembly initiator proteins, it binds directly to the 5'-end of the 23S rRNA, where it nucleates assembly of the 50S subunit. One of the proteins that surrounds the polypeptide exit tunnel on the outside of the subunit. This chain is Large ribosomal subunit protein uL24, found in Vibrio parahaemolyticus serotype O3:K6 (strain RIMD 2210633).